Reading from the N-terminus, the 206-residue chain is FMN-dependent NADH:quinone oxidoreductase (206 aa).

Residues Ser-9, 15–17, and 139–142 each bind FMN; these read SVS and SRGG.

The protein belongs to the azoreductase type 1 family. In terms of assembly, homodimer. The cofactor is FMN.

It carries out the reaction 2 a quinone + NADH + H(+) = 2 a 1,4-benzosemiquinone + NAD(+). It catalyses the reaction N,N-dimethyl-1,4-phenylenediamine + anthranilate + 2 NAD(+) = 2-(4-dimethylaminophenyl)diazenylbenzoate + 2 NADH + 2 H(+). In terms of biological role, quinone reductase that provides resistance to thiol-specific stress caused by electrophilic quinones. Also exhibits azoreductase activity. Catalyzes the reductive cleavage of the azo bond in aromatic azo compounds to the corresponding amines. The chain is FMN-dependent NADH:quinone oxidoreductase from Cupriavidus necator (strain ATCC 17699 / DSM 428 / KCTC 22496 / NCIMB 10442 / H16 / Stanier 337) (Ralstonia eutropha).